The following is a 234-amino-acid chain: BTB/POZ domain-containing protein KCTD5 (234 aa).

Position 2 is an N-acetylalanine (Ala-2). Positions 44–146 (KWVRLNVGGT…LVKDKIRERD (103 aa)) constitute a BTB domain. The segment at 213 to 234 (PYGTTSEPSEKAKILQERGSRM) is disordered. Residues 220-234 (PSEKAKILQERGSRM) are compositionally biased toward basic and acidic residues.

In terms of assembly, homopentamer. Interacts (via C-terminus) with GRASP55/GORASP2. Interacts with CUL3 and with ubiquitinated proteins. Interacts with CRY1.

It is found in the cytoplasm. It localises to the cytosol. Its subcellular location is the nucleus. Its interaction with CUL3 suggests that it may act as a substrate adapter in some E3 ligase complex. Does not affect the function of Kv channel Kv2.1/KCNB1, Kv1.2/KCNA2, Kv4.2/KCND2 and Kv3.4/KCNC4. The sequence is that of BTB/POZ domain-containing protein KCTD5 (Kctd5) from Rattus norvegicus (Rat).